A 311-amino-acid chain; its full sequence is Methenyltetrahydromethanopterin cyclohydrolase (311 aa).

The protein belongs to the MCH family.

Its subcellular location is the cytoplasm. The catalysed reaction is 5,10-methenyl-5,6,7,8-tetrahydromethanopterin + H2O = N(5)-formyl-5,6,7,8-tetrahydromethanopterin + H(+). Its function is as follows. Catalyzes the hydrolysis of methenyl-H(4)MPT(+) to 5-formyl-H(4)MPT. This chain is Methenyltetrahydromethanopterin cyclohydrolase, found in Halobacterium salinarum (strain ATCC 29341 / DSM 671 / R1).